A 203-amino-acid polypeptide reads, in one-letter code: MKKNLLITSVLAMATVSGSVLAAVTNGQLTFNWQGVVPSAPVTQSSWAFVNGLDIPFTPGTEQLNITLDSNKDITARSVKPYDFFIVPVSGNVTPGAPVTRDTSANINSVNAFLSSVPVSNGFVGNKQLTLSTAVEAAKGEVAITLNGQALKVGSASPTVVTVASNKKESHISIDMNAKAAAADVAEGAAINFVAPVTFAVDI.

An N-terminal signal peptide occupies residues 1 to 22; the sequence is MKKNLLITSVLAMATVSGSVLA.

The protein localises to the fimbrium. Its function is as follows. Major subunit of fimbriae. Fimbriae (also called pili), are polar filaments radiating from the surface of the bacterium to a length of 0.5-1.5 micrometers and numbering 100-300 per cell. They enable bacteria to colonize the epithelium of specific host organs. The sequence is that of CS5 fimbrial subunit from Escherichia coli.